A 583-amino-acid chain; its full sequence is Penicillin-binding protein activator LpoA (583 aa).

Positions M1 to A24 are cleaved as a signal peptide. C25 carries the N-palmitoyl cysteine lipid modification. Residue C25 is the site of S-diacylglycerol cysteine attachment.

Belongs to the LpoA family. As to quaternary structure, interacts with PBP1a.

The protein localises to the cell outer membrane. Its function is as follows. Regulator of peptidoglycan synthesis that is essential for the function of penicillin-binding protein 1A (PBP1a). This chain is Penicillin-binding protein activator LpoA, found in Haemophilus ducreyi (strain 35000HP / ATCC 700724).